The primary structure comprises 378 residues: Chaperone protein DnaJ (378 aa).

Residues 5–69 (EYYDRLGVSK…QKRAAYDQYG (65 aa)) enclose the J domain. Residues 134–216 (GVEKEVSYNR…CHGTGHEKQA (83 aa)) form a CR-type zinc finger. Residues C147, C150, C164, C167, C190, C193, C204, and C207 each contribute to the Zn(2+) site. CXXCXGXG motif repeat units follow at residues 147-154 (CGTCLGSG), 164-171 (CRKCHGSG), 190-197 (CDICHGSG), and 204-211 (CQTCHGTG).

This sequence belongs to the DnaJ family. As to quaternary structure, homodimer. Requires Zn(2+) as cofactor.

The protein resides in the cytoplasm. In terms of biological role, participates actively in the response to hyperosmotic and heat shock by preventing the aggregation of stress-denatured proteins and by disaggregating proteins, also in an autonomous, DnaK-independent fashion. Unfolded proteins bind initially to DnaJ; upon interaction with the DnaJ-bound protein, DnaK hydrolyzes its bound ATP, resulting in the formation of a stable complex. GrpE releases ADP from DnaK; ATP binding to DnaK triggers the release of the substrate protein, thus completing the reaction cycle. Several rounds of ATP-dependent interactions between DnaJ, DnaK and GrpE are required for fully efficient folding. Also involved, together with DnaK and GrpE, in the DNA replication of plasmids through activation of initiation proteins. The sequence is that of Chaperone protein DnaJ from Streptococcus pyogenes serotype M6 (strain ATCC BAA-946 / MGAS10394).